A 261-amino-acid chain; its full sequence is Cytochrome c oxidase subunit 3 (261 aa).

At 1–15 (MTHQTHAYHMVNPSP) the chain is on the mitochondrial matrix side. A helical membrane pass occupies residues 16–34 (WPLTGALSALLMTSGLIMW). At 35 to 40 (FHFNSM) the chain is on the mitochondrial intermembrane side. A helical transmembrane segment spans residues 41-66 (YLLMLGLTTNTLTMYQWWRDIVREST). The Mitochondrial matrix portion of the chain corresponds to 67–72 (FQGHHT). Residues 73–105 (PIVQKGLRYGMILFIVSEVFFFAGFFWAFYHSS) traverse the membrane as a helical segment. At 106-128 (LAPTPELGGCWPPTGITPLNPME) the chain is on the mitochondrial intermembrane side. A helical transmembrane segment spans residues 129–152 (VPLLNTSVLLASGVSITWAHHSLM). The Mitochondrial matrix segment spans residues 153–155 (EGN). A helical membrane pass occupies residues 156 to 183 (RKHMLQALFITISLGIYFTLLQASEYYE). At 184–190 (TPFTISD) the chain is on the mitochondrial intermembrane side. A helical transmembrane segment spans residues 191 to 223 (GIYGSTFFMATGFHGLHVIIGSTFLIVCFVRQL). The Mitochondrial matrix segment spans residues 224–232 (KFHFTSNHH). Residues 233 to 256 (FGFEAAAWYWHFVDVVWLFLYVSI) form a helical membrane-spanning segment. Topologically, residues 257–261 (YWWGS) are mitochondrial intermembrane.

It belongs to the cytochrome c oxidase subunit 3 family. As to quaternary structure, component of the cytochrome c oxidase (complex IV, CIV), a multisubunit enzyme composed of 14 subunits. The complex is composed of a catalytic core of 3 subunits MT-CO1, MT-CO2 and MT-CO3, encoded in the mitochondrial DNA, and 11 supernumerary subunits COX4I, COX5A, COX5B, COX6A, COX6B, COX6C, COX7A, COX7B, COX7C, COX8 and NDUFA4, which are encoded in the nuclear genome. The complex exists as a monomer or a dimer and forms supercomplexes (SCs) in the inner mitochondrial membrane with NADH-ubiquinone oxidoreductase (complex I, CI) and ubiquinol-cytochrome c oxidoreductase (cytochrome b-c1 complex, complex III, CIII), resulting in different assemblies (supercomplex SCI(1)III(2)IV(1) and megacomplex MCI(2)III(2)IV(2)).

The protein resides in the mitochondrion inner membrane. It carries out the reaction 4 Fe(II)-[cytochrome c] + O2 + 8 H(+)(in) = 4 Fe(III)-[cytochrome c] + 2 H2O + 4 H(+)(out). Functionally, component of the cytochrome c oxidase, the last enzyme in the mitochondrial electron transport chain which drives oxidative phosphorylation. The respiratory chain contains 3 multisubunit complexes succinate dehydrogenase (complex II, CII), ubiquinol-cytochrome c oxidoreductase (cytochrome b-c1 complex, complex III, CIII) and cytochrome c oxidase (complex IV, CIV), that cooperate to transfer electrons derived from NADH and succinate to molecular oxygen, creating an electrochemical gradient over the inner membrane that drives transmembrane transport and the ATP synthase. Cytochrome c oxidase is the component of the respiratory chain that catalyzes the reduction of oxygen to water. Electrons originating from reduced cytochrome c in the intermembrane space (IMS) are transferred via the dinuclear copper A center (CU(A)) of subunit 2 and heme A of subunit 1 to the active site in subunit 1, a binuclear center (BNC) formed by heme A3 and copper B (CU(B)). The BNC reduces molecular oxygen to 2 water molecules using 4 electrons from cytochrome c in the IMS and 4 protons from the mitochondrial matrix. The sequence is that of Cytochrome c oxidase subunit 3 (MT-CO3) from Phoca vitulina (Harbor seal).